A 103-amino-acid chain; its full sequence is MAAVTLSVSTVKPLGERVFVKVSESEEKTAGGILLPDSAKEKPQVGEVVSAGPGKRNDDGTRAEMEVKVGDKVLYSKYAGTDIKLGGDEYVLLAEKDILAIVN.

It belongs to the GroES chaperonin family. As to quaternary structure, heptamer of 7 subunits arranged in a ring. Interacts with the chaperonin GroEL.

Its subcellular location is the cytoplasm. Together with the chaperonin GroEL, plays an essential role in assisting protein folding. The GroEL-GroES system forms a nano-cage that allows encapsulation of the non-native substrate proteins and provides a physical environment optimized to promote and accelerate protein folding. GroES binds to the apical surface of the GroEL ring, thereby capping the opening of the GroEL channel. The chain is Co-chaperonin GroES from Trichodesmium erythraeum (strain IMS101).